The sequence spans 104 residues: Urease subunit beta (104 aa).

Belongs to the urease beta subunit family. Heterotrimer of UreA (gamma), UreB (beta) and UreC (alpha) subunits. Three heterotrimers associate to form the active enzyme.

It is found in the cytoplasm. It carries out the reaction urea + 2 H2O + H(+) = hydrogencarbonate + 2 NH4(+). The protein operates within nitrogen metabolism; urea degradation; CO(2) and NH(3) from urea (urease route): step 1/1. This is Urease subunit beta from Mycobacterium bovis (strain BCG / Pasteur 1173P2).